A 139-amino-acid chain; its full sequence is D-ribose pyranase (139 aa).

His-20 (proton donor) is an active-site residue. Residues Asp-28, His-106, and 128 to 130 contribute to the substrate site; that span reads YAN.

The protein belongs to the RbsD / FucU family. RbsD subfamily. As to quaternary structure, homodecamer.

It localises to the cytoplasm. The enzyme catalyses beta-D-ribopyranose = beta-D-ribofuranose. The protein operates within carbohydrate metabolism; D-ribose degradation; D-ribose 5-phosphate from beta-D-ribopyranose: step 1/2. Catalyzes the interconversion of beta-pyran and beta-furan forms of D-ribose. This is D-ribose pyranase from Aliivibrio salmonicida (strain LFI1238) (Vibrio salmonicida (strain LFI1238)).